The chain runs to 785 residues: Endonuclease MutS2 (785 aa).

Residue 335–342 (GPNTGGKT) coordinates ATP. One can recognise a Smr domain in the interval 710–785 (LDLRGERYED…GNGVTIVEFK (76 aa)).

It belongs to the DNA mismatch repair MutS family. MutS2 subfamily. Homodimer. Binds to stalled ribosomes, contacting rRNA.

In terms of biological role, endonuclease that is involved in the suppression of homologous recombination and thus may have a key role in the control of bacterial genetic diversity. Functionally, acts as a ribosome collision sensor, splitting the ribosome into its 2 subunits. Detects stalled/collided 70S ribosomes which it binds and splits by an ATP-hydrolysis driven conformational change. Acts upstream of the ribosome quality control system (RQC), a ribosome-associated complex that mediates the extraction of incompletely synthesized nascent chains from stalled ribosomes and their subsequent degradation. Probably generates substrates for RQC. The protein is Endonuclease MutS2 of Listeria monocytogenes serotype 4b (strain CLIP80459).